We begin with the raw amino-acid sequence, 265 residues long: Glycine/sarcosine N-methyltransferase (265 aa).

Residues Y28, W36, R45, A69, D90, 116–117 (DW), and L134 contribute to the S-adenosyl-L-methionine site. Residues N136, R169, and Y208 each coordinate substrate.

This sequence belongs to the class I-like SAM-binding methyltransferase superfamily. Glycine N-methyltransferase family. In terms of assembly, monomer.

The enzyme catalyses glycine + 2 S-adenosyl-L-methionine = N,N-dimethylglycine + 2 S-adenosyl-L-homocysteine + 2 H(+). It catalyses the reaction glycine + S-adenosyl-L-methionine = sarcosine + S-adenosyl-L-homocysteine + H(+). It carries out the reaction sarcosine + S-adenosyl-L-methionine = N,N-dimethylglycine + S-adenosyl-L-homocysteine + H(+). The protein operates within amine and polyamine biosynthesis; betaine biosynthesis via glycine pathway; betaine from glycine: step 1/3. Its pathway is amine and polyamine biosynthesis; betaine biosynthesis via glycine pathway; betaine from glycine: step 2/3. With respect to regulation, inhibited by acetate, dimethylglycine and S-adenosyl-L-homocysteine. Functionally, catalyzes the methylation of glycine and sarcosine to sarcosine and dimethylglycine, respectively, with S-adenosylmethionine (AdoMet) acting as the methyl donor. The polypeptide is Glycine/sarcosine N-methyltransferase (Aphanothece halophytica).